A 412-amino-acid chain; its full sequence is Cysteate synthase (412 aa).

Position 105 is an N6-(pyridoxal phosphate)lysine (Lys105). Pyridoxal 5'-phosphate-binding residues include Asn131 and Thr382.

The protein belongs to the threonine synthase family. Cysteate synthase subfamily. Homotrimer. The cofactor is pyridoxal 5'-phosphate.

It carries out the reaction O-phospho-L-serine + sulfite + H(+) = L-cysteate + phosphate. It participates in cofactor biosynthesis; coenzyme M biosynthesis. Functionally, specifically catalyzes the beta-elimination of phosphate from L-phosphoserine and the beta-addition of sulfite to the dehydroalanine intermediate to produce L-cysteate. The sequence is that of Cysteate synthase from Methanocorpusculum labreanum (strain ATCC 43576 / DSM 4855 / Z).